Consider the following 40-residue polypeptide: Photosystem II reaction center protein J (40 aa).

Residues 8–28 form a helical membrane-spanning segment; sequence IPLWIIGTVTGILVIGLVGIF.

It belongs to the PsbJ family. As to quaternary structure, PSII is composed of 1 copy each of membrane proteins PsbA, PsbB, PsbC, PsbD, PsbE, PsbF, PsbH, PsbI, PsbJ, PsbK, PsbL, PsbM, PsbT, PsbX, PsbY, PsbZ, Psb30/Ycf12, at least 3 peripheral proteins of the oxygen-evolving complex and a large number of cofactors. It forms dimeric complexes.

Its subcellular location is the plastid. The protein localises to the chloroplast thylakoid membrane. Its function is as follows. One of the components of the core complex of photosystem II (PSII). PSII is a light-driven water:plastoquinone oxidoreductase that uses light energy to abstract electrons from H(2)O, generating O(2) and a proton gradient subsequently used for ATP formation. It consists of a core antenna complex that captures photons, and an electron transfer chain that converts photonic excitation into a charge separation. In Jasminum nudiflorum (Winter jasmine), this protein is Photosystem II reaction center protein J.